A 633-amino-acid polypeptide reads, in one-letter code: Probable potassium transport system protein Kup (633 aa).

12 consecutive transmembrane segments (helical) span residues M21–L41, I61–V81, L112–P132, G149–Q169, I176–V196, F217–T237, W258–L278, L290–I310, I348–F368, A377–M397, L398–V418, and I430–T450.

The protein belongs to the HAK/KUP transporter (TC 2.A.72) family.

The protein resides in the cell inner membrane. The enzyme catalyses K(+)(in) + H(+)(in) = K(+)(out) + H(+)(out). Transport of potassium into the cell. Likely operates as a K(+):H(+) symporter. The chain is Probable potassium transport system protein Kup from Pseudomonas fluorescens (strain Pf0-1).